A 406-amino-acid chain; its full sequence is COP9 signalosome complex subunit 4 (406 aa).

Alanine 2 is modified (N-acetylalanine). Position 25 is an N6-acetyllysine (lysine 25). A PCI domain is found at 197–366 (YRRKFIEAAQ…GIVHFETREA (170 aa)).

This sequence belongs to the CSN4 family. In terms of assembly, component of the CSN complex, composed of COPS1/GPS1, COPS2, COPS3, COPS4, COPS5, COPS6, COPS7 (COPS7A or COPS7B), COPS8 and COPS9. In the complex, it probably interacts directly with COPS1, COPS2, COPS3, COPS5, COPS6, COPS7 (COPS7A or COPS7B) and COPS8. Interacts with TOR1A; the interaction is direct and associates TOR1A and SNAPIN with the CSN complex. Interacts with STON2; controls STON2 neddylation levels. Interacts with ERCC6.

It is found in the cytoplasm. Its subcellular location is the nucleus. It localises to the cytoplasmic vesicle. The protein localises to the secretory vesicle. The protein resides in the synaptic vesicle. In terms of biological role, component of the COP9 signalosome complex (CSN), a complex involved in various cellular and developmental processes. The CSN complex is an essential regulator of the ubiquitin (Ubl) conjugation pathway by mediating the deneddylation of the cullin subunits of SCF-type E3 ligase complexes, leading to decrease the Ubl ligase activity of SCF-type complexes such as SCF, CSA or DDB2. Also involved in the deneddylation of non-cullin subunits such as STON2. The complex is also involved in phosphorylation of p53/TP53, c-jun/JUN, IkappaBalpha/NFKBIA, ITPK1, IRF8/ICSBP and SNAPIN, possibly via its association with CK2 and PKD kinases. CSN-dependent phosphorylation of TP53 and JUN promotes and protects degradation by the Ubl system, respectively. The chain is COP9 signalosome complex subunit 4 (Cops4) from Mus musculus (Mouse).